The primary structure comprises 189 residues: Small ribosomal subunit protein uS4 (189 aa).

The region spanning 107-178 is the S4 RNA-binding domain; that stretch reads RRLQTQVFKL…AGRVKRKNQG (72 aa). Residues 160-189 are disordered; it reads HNSPYGGGRAGRVKRKNQGKGGEEGAEEEE.

The protein belongs to the universal ribosomal protein uS4 family. Component of the small ribosomal subunit. Mature ribosomes consist of a small (40S) and a large (60S) subunit. The 40S subunit contains about 32 different proteins and 1 molecule of RNA (18S). The 60S subunit contains 45 different proteins and 3 molecules of RNA (25S, 5.8S and 5S).

The protein localises to the cytoplasm. Component of the ribosome, a large ribonucleoprotein complex responsible for the synthesis of proteins in the cell. The small ribosomal subunit (SSU) binds messenger RNAs (mRNAs) and translates the encoded message by selecting cognate aminoacyl-transfer RNA (tRNA) molecules. The large subunit (LSU) contains the ribosomal catalytic site termed the peptidyl transferase center (PTC), which catalyzes the formation of peptide bonds, thereby polymerizing the amino acids delivered by tRNAs into a polypeptide chain. The nascent polypeptides leave the ribosome through a tunnel in the LSU and interact with protein factors that function in enzymatic processing, targeting, and the membrane insertion of nascent chains at the exit of the ribosomal tunnel. RPS9B is involved in nucleolar processing of pre-18S ribosomal RNA and ribosome assembly. The protein is Small ribosomal subunit protein uS4 (RPS9B) of Candida albicans (strain SC5314 / ATCC MYA-2876) (Yeast).